A 461-amino-acid chain; its full sequence is ERBB receptor feedback inhibitor 1 (461 aa).

The residue at position 2 (Ser-2) is an N-acetylserine. Phosphothreonine is present on residues Thr-126 and Thr-130. The disordered stretch occupies residues 228-353; the sequence is QNRVVPDPNP…VMPPTQSFAP (126 aa). A phosphoserine mark is found at Ser-251 and Ser-272. Residues 265-274 are compositionally biased toward polar residues; it reads SSCTHRASPS. Residues 283–292 show a composition bias toward pro residues; the sequence is PPRVPIPPRP. Phosphoserine is present on Ser-301. The span at 311 to 324 shows a compositional bias: basic and acidic residues; the sequence is DEDRPPKVPPREPL. Residues 325–336 show a composition bias toward polar residues; the sequence is SRSNSRTPSPKS. The interval 333–362 is interaction with EGFR and ERBB2 and regulation of EGFR activation; that stretch reads SPKSLPSYLNGVMPPTQSFAPDPKYVSSKA. A Phosphoserine modification is found at Ser-460.

Belongs to the MIG6 family. As to quaternary structure, interacts with EGFR. Interacts with ERBB2. In terms of tissue distribution, detected in lung, in airway epithelial cells and alveolar type 2 cells (at protein level). Detected in uterus stroma, luminal epithelium and glandular epithelium.

The protein resides in the cytoplasm. It localises to the cell membrane. It is found in the nucleus. Negative regulator of EGFR signaling in skin morphogenesis. Acts as a negative regulator for several EGFR family members, including ERBB2, ERBB3 and ERBB4. Inhibits EGFR catalytic activity by interfering with its dimerization. Inhibits autophosphorylation of EGFR, ERBB2 and ERBB4. Important for normal keratinocyte proliferation and differentiation. Plays a role in modulating the response to steroid hormones in the uterus. Required for normal response to progesterone in the uterus and for fertility. Mediates epithelial estrogen responses in the uterus by regulating ESR1 levels and activation. Important for regulation of endometrium cell proliferation. Important for normal prenatal and perinatal lung development. This chain is ERBB receptor feedback inhibitor 1 (Errfi1), found in Mus musculus (Mouse).